Consider the following 3411-residue polypeptide: Genome polyprotein (3411 aa).

At 1 to 104 (MSGRKAQGKT…LSSRKRRSHD (104 aa)) the chain is on the cytoplasmic side. A hydrophobic; homodimerization of capsid protein C region spans residues 38 to 72 (PGPSRGVQGFIFFFLFNILTGKKITAHLKRLWKML). A propeptide spans 102–121 (SHDVLTVQFLILGMLLMTGG) (ER anchor for the capsid protein C, removed in mature form by serine protease NS3). Residues 105–125 (VLTVQFLILGMLLMTGGVTLV) form a helical membrane-spanning segment. Over 126-244 (RKNRWLLLNV…GERQLQKIER (119 aa)) the chain is Extracellular. 2 N-linked (GlcNAc...) asparagine; by host glycosylation sites follow: N134 and N150. The chain crosses the membrane as a helical span at residues 245–265 (WFVRNPFFAVTALTIAYLVGS). The Cytoplasmic segment spans residues 266 to 270 (NMTQR). The chain crosses the membrane as a helical span at residues 271–285 (VVIALLVLAVGPAYS). Residues 286–730 (AHCIGITDRD…TVFGSAFQGL (445 aa)) are Extracellular-facing. 8 disulfide bridges follow: C288–C315, C345–C401, C345–C406, C359–C390, C377–C401, C377–C406, C467–C568, and C585–C615. Positions 383–396 (DRGWGNGCGLFGKG) are fusion peptide. A helical transmembrane segment spans residues 731–751 (FGGLNWITKVIIGAVLIWVGI). Topologically, residues 752 to 757 (NTRNMT) are extracellular. A helical membrane pass occupies residues 758–778 (MSMSMILVGVIMMFLSLGVGA). The Extracellular portion of the chain corresponds to 779 to 1132 (DQGCAINFAK…LVRSWVTAGE (354 aa)). Cystine bridges form between C782–C793, C833–C921, C957–C1002, C1058–C1107, C1069–C1091, and C1090–C1094. N908 and N986 each carry an N-linked (GlcNAc...) asparagine; by host glycan. The chain crosses the membrane as a helical span at residues 1133–1153 (IHAVPFGLVSMMIALEVVLRK). Over 1154-1201 (RQGPKQMLVGGVVLLGAMLVGQVTLLDLLKLTVAVGLHFHEMNNGGDA) the chain is Cytoplasmic. A helical membrane pass occupies residues 1202 to 1222 (MYMALIAAFSVRPGLLIGFGL). Residues 1223-1287 (RTLWSPRERL…ILPLMALLTP (65 aa)) are Lumenal-facing. Residues 1288–1308 (VTMAEVRLATMLFCTVVIIGV) form a helical membrane-spanning segment. Residues 1309-1355 (LYQNSKDTSMQKTIPLVALTLTSYLGLTQPFLGLCAFLATRIFGRRS) are Cytoplasmic-facing. A helical transmembrane segment spans residues 1356-1376 (IPVNEALAAAGLVGVLAGLAF). At 1377 to 1378 (QE) the chain is on the lumenal side. The helical transmembrane segment at 1379-1399 (MENFLGPIAVGGILMMLVSVA) threads the bilayer. Residues 1400–1456 (GRVDGLELKKLGEVAWEEEAEISGSSARYDVALSEQGEFKLLSEEKVPWDQVVMTSL) lie on the Cytoplasmic side of the membrane. The interacts with and activates NS3 protease stretch occupies residues 1407-1446 (LKKLGEVAWEEEAEISGSSARYDVALSEQGEFKLLSEEKV). An intramembrane region (helical) is located at residues 1457–1477 (ALVGAAIHPFALLLVLAGWLF). Topologically, residues 1478–2157 (HVRGARRSGD…RNALSMMPEA (680 aa)) are cytoplasmic. Residues 1485-1665 (SGDVLWDIPT…EVKEEGKEEL (181 aa)) form the Peptidase S7 domain. Residues H1537, D1561, and S1622 each act as charge relay system; for serine protease NS3 activity in the active site. One can recognise a Helicase ATP-binding domain in the interval 1669–1825 (PTMLKKGKTT…HSNGEIEDVQ (157 aa)). Positions 1673-1676 (KKGK) are important for RNA-binding. 1682 to 1689 (FHPGAGKT) is a binding site for ATP. Residues 1773 to 1776 (DEAH) carry the DEAH box motif. Positions 1820-1997 (EIEDVQTDIP…VRGGMVAPLY (178 aa)) constitute a Helicase C-terminal domain. K1877 bears the N6-acetyllysine; by host mark. Residues 1942 to 1961 (AAQRRGRIGRNPNRDGDSYY) are disordered. Residues 2158-2178 (MTIVMLFILAGLLTSGMVIFF) form a helical membrane-spanning segment. The Lumenal segment spans residues 2179–2186 (MSPKGISR). The helical intramembrane region spans 2187-2207 (MSMAMGTMAGCGYLMFLGGVK). The Lumenal segment spans residues 2208 to 2209 (PT). The helical transmembrane segment at 2210–2230 (HISYIMLIFFVLMVVVIPEPG) threads the bilayer. At 2231–2241 (QQRSIQDNQVA) the chain is on the cytoplasmic side. A helical membrane pass occupies residues 2242-2262 (FLIIGILTLVSVVAANELGML). Residues 2263–2293 (EKTKEDLFGKKNSIPSSASPWSWPDLDLKPG) are Lumenal-facing. An intramembrane region (helical) is located at residues 2294-2314 (AAWTVYVGIVTMLSPMLHHWI). Residues 2315-2360 (KVEYGNLSLSGIAQSASVLSFMDKGIPFMKMNISVIMLLISGWNSI) are Lumenal-facing. Residues 2361-2380 (TVMPLLCGIGCAMLHWSLIL) traverse the membrane as a helical segment. Topologically, residues 2381 to 2421 (PGIKAQQSKLAQRRVFHGVAKNPVVDGNPTVDIEEAPEMPV) are cytoplasmic. The helical transmembrane segment at 2422–2442 (LYEKKLALYLLLALSLASVAM) threads the bilayer. The Lumenal segment spans residues 2443–2445 (CRT). Residues 2446-2466 (PFSLAEGIVLASAALGPLIEG) form a helical membrane-spanning segment. The Cytoplasmic segment spans residues 2467–3411 (NTSLLWNGPM…DADLQPGELI (945 aa)). Residues 2507 to 2771 (GTANGKTLGE…DVTLPIGTRS (265 aa)) enclose the mRNA cap 0-1 NS5-type MT domain. S2562 is an S-adenosyl-L-methionine binding site. Position 2562 is a phosphoserine (S2562). K2567 functions as the For 2'-O-MTase activity in the catalytic mechanism. G2592, W2593, T2610, L2611, D2637, and I2638 together coordinate S-adenosyl-L-methionine. D2652 serves as the catalytic For 2'-O-MTase activity. I2653 contacts S-adenosyl-L-methionine. Catalysis depends on for 2'-O-MTase activity residues K2688 and E2724. Y2726 provides a ligand contact to S-adenosyl-L-methionine. Residues 2878–2911 (RKIMKVVNRWLFRHLAREKNPRLCTKEEFIAKVR) carry the Nuclear localization signal motif. Zn(2+) contacts are provided by E2945, H2949, C2954, and C2957. A RdRp catalytic domain is found at 3035 to 3187 (GGFYADDTAG…RPIDDRFGLA (153 aa)). The Zn(2+) site is built by H3222, C3238, and C3357.

The protein in the N-terminal section; belongs to the class I-like SAM-binding methyltransferase superfamily. mRNA cap 0-1 NS5-type methyltransferase family. In terms of assembly, homodimer. Interacts (via N-terminus) with host EXOC1 (via C-terminus); this interaction results in EXOC1 degradation through the proteasome degradation pathway. Forms heterodimers with envelope protein E in the endoplasmic reticulum and Golgi. As to quaternary structure, homodimer; in the endoplasmic reticulum and Golgi. Interacts with protein prM. Interacts with non-structural protein 1. In terms of assembly, homodimer; Homohexamer when secreted. Interacts with envelope protein E. Interacts (via N-terminus) with serine protease NS3. As to quaternary structure, forms a heterodimer with serine protease NS3. May form homooligomers. In terms of assembly, forms a heterodimer with NS2B. Interacts with non-structural protein 2A (via N-terminus). Interacts with NS4B. Interacts with unphosphorylated RNA-directed RNA polymerase NS5; this interaction stimulates RNA-directed RNA polymerase NS5 guanylyltransferase activity. NS3 interacts with host PDCD6IP; this interaction contributes to virion release. Interacts with serine protease NS3. As to quaternary structure, homodimer. Interacts with host STAT2; this interaction prevents the establishment of cellular antiviral state. Interacts with serine protease NS3. Interacts with host TRIM23; this interaction leads to NS5 ubiquitination. In terms of processing, specific enzymatic cleavages in vivo yield mature proteins. The nascent capsid protein C contains a C-terminal hydrophobic domain that act as a signal sequence for translocation of prM into the lumen of the ER. Mature capsid protein C is cleaved at a site upstream of this hydrophobic domain by NS3. prM is cleaved in post-Golgi vesicles by a host furin, releasing the mature small envelope protein M, and peptide pr. Non-structural protein 2A-alpha, a C-terminally truncated form of non-structural protein 2A, results from partial cleavage by NS3. Specific enzymatic cleavages in vivo yield mature proteins peptide 2K acts as a signal sequence and is removed from the N-terminus of NS4B by the host signal peptidase in the ER lumen. Signal cleavage at the 2K-4B site requires a prior NS3 protease-mediated cleavage at the 4A-2K site. Post-translationally, cleaved in post-Golgi vesicles by a host furin, releasing the mature small envelope protein M, and peptide pr. This cleavage is incomplete as up to 30% of viral particles still carry uncleaved prM. N-glycosylated. In terms of processing, N-glycosylated. The excreted form is glycosylated and this is required for efficient secretion of the protein from infected cells. Post-translationally, polyubiquitinated; ubiquitination is probably mediated by host TRIM23 and is prerequisite for NS5-STAT2 interaction. NS5 is not ISGylated or sumoylated. Phosphorylated on serines residues. This phosphorylation may trigger NS5 nuclear localization. In terms of processing, acetylated by host KAT5. Acetylation modulates NS3 RNA-binding and -unwinding activities and plays an important role for viral replication.

The protein localises to the virion. It localises to the host nucleus. Its subcellular location is the host cytoplasm. It is found in the host perinuclear region. The protein resides in the secreted. The protein localises to the virion membrane. It localises to the host endoplasmic reticulum membrane. The catalysed reaction is Selective hydrolysis of -Xaa-Xaa-|-Yaa- bonds in which each of the Xaa can be either Arg or Lys and Yaa can be either Ser or Ala.. It catalyses the reaction RNA(n) + a ribonucleoside 5'-triphosphate = RNA(n+1) + diphosphate. The enzyme catalyses a ribonucleoside 5'-triphosphate + H2O = a ribonucleoside 5'-diphosphate + phosphate + H(+). It carries out the reaction ATP + H2O = ADP + phosphate + H(+). The catalysed reaction is a 5'-end (5'-triphosphoguanosine)-ribonucleoside in mRNA + S-adenosyl-L-methionine = a 5'-end (N(7)-methyl 5'-triphosphoguanosine)-ribonucleoside in mRNA + S-adenosyl-L-homocysteine. It catalyses the reaction a 5'-end (N(7)-methyl 5'-triphosphoguanosine)-ribonucleoside in mRNA + S-adenosyl-L-methionine = a 5'-end (N(7)-methyl 5'-triphosphoguanosine)-(2'-O-methyl-ribonucleoside) in mRNA + S-adenosyl-L-homocysteine + H(+). Plays a role in virus budding by binding to the cell membrane and gathering the viral RNA into a nucleocapsid that forms the core of a mature virus particle. During virus entry, may induce genome penetration into the host cytoplasm after hemifusion induced by the surface proteins. Can migrate to the cell nucleus where it modulates host functions. In terms of biological role, inhibits RNA silencing by interfering with host Dicer. Its function is as follows. Prevents premature fusion activity of envelope proteins in trans-Golgi by binding to envelope protein E at pH6.0. After virion release in extracellular space, gets dissociated from E dimers. Functionally, acts as a chaperone for envelope protein E during intracellular virion assembly by masking and inactivating envelope protein E fusion peptide. prM is the only viral peptide matured by host furin in the trans-Golgi network probably to avoid catastrophic activation of the viral fusion activity in acidic Golgi compartment prior to virion release. prM-E cleavage is inefficient, and many virions are only partially matured. These uncleaved prM would play a role in immune evasion. May play a role in virus budding. Exerts cytotoxic effects by activating a mitochondrial apoptotic pathway through M ectodomain. May display a viroporin activity. In terms of biological role, binds to host cell surface receptor and mediates fusion between viral and cellular membranes. Envelope protein is synthesized in the endoplasmic reticulum in the form of heterodimer with protein prM. They play a role in virion budding in the ER, and the newly formed immature particle is covered with 60 spikes composed of heterodimer between precursor prM and envelope protein E. The virion is transported to the Golgi apparatus where the low pH causes dissociation of PrM-E heterodimers and formation of E homodimers. prM-E cleavage is inefficient, and many virions are only partially matured. These uncleaved prM would play a role in immune evasion. Its function is as follows. Involved in immune evasion, pathogenesis and viral replication. Once cleaved off the polyprotein, is targeted to three destinations: the viral replication cycle, the plasma membrane and the extracellular compartment. Essential for viral replication. Required for formation of the replication complex and recruitment of other non-structural proteins to the ER-derived membrane structures. Excreted as a hexameric lipoparticle that plays a role against host immune response. Antagonizing the complement function. Binds to the host macrophages and dendritic cells. Inhibits signal transduction originating from Toll-like receptor 3 (TLR3). Functionally, component of the viral RNA replication complex that functions in virion assembly and antagonizes the host immune response. Required cofactor for the serine protease function of NS3. May have membrane-destabilizing activity and form viroporins. In terms of biological role, displays three enzymatic activities: serine protease, NTPase and RNA helicase. NS3 serine protease, in association with NS2B, performs its autocleavage and cleaves the polyprotein at dibasic sites in the cytoplasm: C-prM, NS2A-NS2B, NS2B-NS3, NS3-NS4A, NS4A-2K and NS4B-NS5. NS3 RNA helicase binds RNA and unwinds dsRNA in the 3' to 5' direction. Also plays a role in virus assembly. Its function is as follows. Regulates the ATPase activity of the NS3 helicase activity. NS4A allows NS3 helicase to conserve energy during unwinding. Functionally, functions as a signal peptide for NS4B and is required for the interferon antagonism activity of the latter. Induces the formation of ER-derived membrane vesicles where the viral replication takes place. Inhibits interferon (IFN)-induced host STAT1 phosphorylation and nuclear translocation, thereby preventing the establishment of cellular antiviral state by blocking the IFN-alpha/beta pathway. In terms of biological role, replicates the viral (+) and (-) RNA genome, and performs the capping of genomes in the cytoplasm. NS5 methylates viral RNA cap at guanine N-7 and ribose 2'-O positions. Besides its role in RNA genome replication, also prevents the establishment of cellular antiviral state by blocking the interferon-alpha/beta (IFN-alpha/beta) signaling pathway. IFN-I induces binding of NS5 to host IFN-activated transcription factor STAT2, preventing its transcriptional activity. Host TRIM23 is the E3 ligase that interacts with and polyubiquitinates NS5 to promote its binding to STAT2 and trigger IFN-I signaling inhibition. This is Genome polyprotein from Yellow fever virus (strain French neurotropic vaccine FNV) (YFV).